Reading from the N-terminus, the 400-residue chain is Endoglucanase 5A (400 aa).

An N-terminal signal peptide occupies residues 1–26 (MKKITTIFVVLLMTVALFSIGNTTAA). Substrate-binding positions include H61, 65–66 (WY), Y92, and H127. E165 serves as the catalytic Proton donor. Y228 contributes to the substrate binding site. The active-site Nucleophile is E254. Residues 260–261 (AT), W288, and 293–295 (KDE) contribute to the substrate site. Residues 328 to 363 (ESASIPPSDPTPPSDPGEPDPTPPSDPGEYPAWDPN) are disordered. Residues 334-353 (PSDPTPPSDPGEPDPTPPSD) are compositionally biased toward pro residues. One can recognise a Chitin-binding type-3 domain in the interval 357–396 (YPAWDPNQIYTNEIVYHNGQLWQAKWWTQNQEPGDPYGPW).

It belongs to the glycosyl hydrolase 5 (cellulase A) family. Monomer.

The protein localises to the secreted. The enzyme catalyses Endohydrolysis of (1-&gt;4)-beta-D-glucosidic linkages in cellulose, lichenin and cereal beta-D-glucans.. In Salipaludibacillus agaradhaerens (Bacillus agaradhaerens), this protein is Endoglucanase 5A (cel5A).